Consider the following 124-residue polypeptide: Large ribosomal subunit protein mL52 (124 aa).

The N-terminal 23 residues, 1–23, are a transit peptide targeting the mitochondrion; the sequence is MAALGMLLSTGVRRLHCGSAARA. Residues 99–124 are disordered; it reads LQEEKRKQQNALKPKGVLLQNPGPSQ.

This sequence belongs to the mitochondrion-specific ribosomal protein mL52 family. In terms of assembly, component of the mitochondrial ribosome large subunit (39S) which comprises a 16S rRNA and about 50 distinct proteins.

It localises to the mitochondrion. The chain is Large ribosomal subunit protein mL52 (MRPL52) from Bos taurus (Bovine).